Consider the following 238-residue polypeptide: Sugar fermentation stimulation protein homolog (238 aa).

It belongs to the SfsA family.

The chain is Sugar fermentation stimulation protein homolog from Haemophilus influenzae (strain PittGG).